We begin with the raw amino-acid sequence, 131 residues long: Large ribosomal subunit protein uL24 (131 aa).

It belongs to the universal ribosomal protein uL24 family. As to quaternary structure, part of the 50S ribosomal subunit.

One of two assembly initiator proteins, it binds directly to the 5'-end of the 23S rRNA, where it nucleates assembly of the 50S subunit. Its function is as follows. Located at the polypeptide exit tunnel on the outside of the subunit. The polypeptide is Large ribosomal subunit protein uL24 (Korarchaeum cryptofilum (strain OPF8)).